A 301-amino-acid polypeptide reads, in one-letter code: Phosphatidylglycerol--prolipoprotein diacylglyceryl transferase (301 aa).

The next 3 helical transmembrane spans lie at 17–37 (LAVRWYGLMYLVAFIAAIVVG), 59–79 (MLFYGVLGTILGGRLGYVLFY), and 97–117 (GGMSFHGGFLGVTLAMVLFAY). An a 1,2-diacyl-sn-glycero-3-phospho-(1'-sn-glycerol)-binding site is contributed by Arg142. A run of 2 helical transmembrane segments spans residues 230 to 250 (MGAISAVFLIGYGLARFTVEF) and 265 to 285 (LSMGQWLSLPMILVGIGLLVW).

This sequence belongs to the Lgt family.

It localises to the cell inner membrane. The enzyme catalyses L-cysteinyl-[prolipoprotein] + a 1,2-diacyl-sn-glycero-3-phospho-(1'-sn-glycerol) = an S-1,2-diacyl-sn-glyceryl-L-cysteinyl-[prolipoprotein] + sn-glycerol 1-phosphate + H(+). It functions in the pathway protein modification; lipoprotein biosynthesis (diacylglyceryl transfer). Its function is as follows. Catalyzes the transfer of the diacylglyceryl group from phosphatidylglycerol to the sulfhydryl group of the N-terminal cysteine of a prolipoprotein, the first step in the formation of mature lipoproteins. This chain is Phosphatidylglycerol--prolipoprotein diacylglyceryl transferase, found in Paraburkholderia phytofirmans (strain DSM 17436 / LMG 22146 / PsJN) (Burkholderia phytofirmans).